Consider the following 102-residue polypeptide: Small ribosomal subunit protein uS10 (102 aa).

It belongs to the universal ribosomal protein uS10 family. In terms of assembly, part of the 30S ribosomal subunit.

Involved in the binding of tRNA to the ribosomes. The chain is Small ribosomal subunit protein uS10 from Beijerinckia indica subsp. indica (strain ATCC 9039 / DSM 1715 / NCIMB 8712).